The following is a 171-amino-acid chain: Shikimate kinase (171 aa).

Residue Gly-14–Thr-19 coordinates ATP. Ser-18 is a binding site for Mg(2+). The substrate site is built by Asp-36, Arg-60, and Gly-82. Arg-120 serves as a coordination point for ATP. Substrate is bound at residue Arg-139. ATP is bound at residue Gln-156.

It belongs to the shikimate kinase family. As to quaternary structure, monomer. Requires Mg(2+) as cofactor.

Its subcellular location is the cytoplasm. The enzyme catalyses shikimate + ATP = 3-phosphoshikimate + ADP + H(+). Its pathway is metabolic intermediate biosynthesis; chorismate biosynthesis; chorismate from D-erythrose 4-phosphate and phosphoenolpyruvate: step 5/7. Functionally, catalyzes the specific phosphorylation of the 3-hydroxyl group of shikimic acid using ATP as a cosubstrate. In Shewanella frigidimarina (strain NCIMB 400), this protein is Shikimate kinase.